We begin with the raw amino-acid sequence, 114 residues long: KPKEDREWEKFKTKHITSQSVADFNCNRTMNDPAYTPDGQCKPVNTFIHSTTGPVKEICRRATGRVNKSSTQQFTLTTCKNPIRCKYSQSNTTNFICITCRDNYPVHFVKTGKC.

The Proton acceptor role is filled by His15. 4 disulfide bridges follow: Cys26–Cys79, Cys41–Cys85, Cys59–Cys100, and Cys97–Cys114. The N-linked (GlcNAc...) asparagine glycan is linked to Asn27. 42-46 (KPVNT) contributes to the substrate binding site. Residues Asn67 and Asn91 are each glycosylated (N-linked (GlcNAc...) asparagine). His107 serves as the catalytic Proton donor.

Belongs to the pancreatic ribonuclease family. As to quaternary structure, monomer. There are at least five different forms arising from glycan heterogeneity.

It is found in the secreted. Functionally, endonuclease, hydrolyzes highly polymerized RNA, poly(U) and poly(C), and the dinucleotides CpA and UpA. More active towards rCA than rUA or rUG. Has cytotoxic activity against cultured human submaxillary gland carcinoma cells. This Lithobates pipiens (Northern leopard frog) protein is Amphinase-1.